The following is a 107-amino-acid chain: uncharacterized protein (107 aa).

Helical transmembrane passes span 16 to 36 (VIPCTLSSPSFVLMAVISESL), 47 to 67 (IISLIESAVTSLSYVTWHSLV), and 85 to 105 (LIVLVQALHVIPCTASITSLI).

The protein resides in the membrane. This is an uncharacterized protein from Saccharomyces cerevisiae (strain ATCC 204508 / S288c) (Baker's yeast).